Consider the following 185-residue polypeptide: Probable chorismate pyruvate-lyase (185 aa).

Substrate-binding residues include R75, L113, and E174.

It belongs to the UbiC family.

The protein resides in the cytoplasm. The catalysed reaction is chorismate = 4-hydroxybenzoate + pyruvate. Its pathway is cofactor biosynthesis; ubiquinone biosynthesis. Removes the pyruvyl group from chorismate, with concomitant aromatization of the ring, to provide 4-hydroxybenzoate (4HB) for the ubiquinone pathway. The sequence is that of Probable chorismate pyruvate-lyase from Aromatoleum aromaticum (strain DSM 19018 / LMG 30748 / EbN1) (Azoarcus sp. (strain EbN1)).